A 339-amino-acid chain; its full sequence is Protein-lysine N-methyltransferase EFM3 (339 aa).

S-adenosyl-L-methionine contacts are provided by residues W137 and 174 to 176; that span reads GAG. T177 carries the phosphothreonine modification. D199, W233, and A248 together coordinate S-adenosyl-L-methionine.

It belongs to the class I-like SAM-binding methyltransferase superfamily. EEF2KMT family.

It localises to the cytoplasm. S-adenosyl-L-methionine-dependent protein-lysine N-methyltransferase that mono-, di- and trimethylates elongation factor 2 (EFT1/EFT2) at 'Lys-509'. The sequence is that of Protein-lysine N-methyltransferase EFM3 from Saccharomyces cerevisiae (strain ATCC 204508 / S288c) (Baker's yeast).